Here is a 472-residue protein sequence, read N- to C-terminus: Trigger factor (472 aa).

Residues 174–261 (GDIALVSFKG…LEDLKIKELP (88 aa)) enclose the PPIase FKBP-type domain. Residues 433–472 (NNTVVEKPPEKARDQIKEKSSKKKTTKTNKEKKSSKTPKS) form a disordered region. Basic and acidic residues predominate over residues 439-451 (KPPEKARDQIKEK).

This sequence belongs to the FKBP-type PPIase family. Tig subfamily.

The protein localises to the cytoplasm. It carries out the reaction [protein]-peptidylproline (omega=180) = [protein]-peptidylproline (omega=0). Involved in protein export. Acts as a chaperone by maintaining the newly synthesized protein in an open conformation. Functions as a peptidyl-prolyl cis-trans isomerase. This chain is Trigger factor, found in Prochlorococcus marinus (strain NATL1A).